Reading from the N-terminus, the 890-residue chain is Translation initiation factor IF-2 (890 aa).

The segment at Leu45–Gln304 is disordered. Positions Ser67–Val81 are enriched in polar residues. Positions Val92–Asp217 are enriched in basic and acidic residues. Residues Gly252–Asn266 are compositionally biased toward basic residues. Basic and acidic residues predominate over residues Lys267–Ala280. Residues Pro389–Lys558 form the tr-type G domain. The G1 stretch occupies residues Gly398–Thr405. Gly398–Thr405 contacts GTP. The segment at Gly423 to His427 is G2. Residues Asp444 to Gly447 form a G3 region. Residues Asp444–His448 and Asn498–Asp501 contribute to the GTP site. The tract at residues Asn498 to Asp501 is G4. The tract at residues Ser534–Lys536 is G5. Residue Lys808 is modified to N6-acetyllysine.

This sequence belongs to the TRAFAC class translation factor GTPase superfamily. Classic translation factor GTPase family. IF-2 subfamily.

It localises to the cytoplasm. One of the essential components for the initiation of protein synthesis. Protects formylmethionyl-tRNA from spontaneous hydrolysis and promotes its binding to the 30S ribosomal subunits. Also involved in the hydrolysis of GTP during the formation of the 70S ribosomal complex. This chain is Translation initiation factor IF-2, found in Escherichia coli O81 (strain ED1a).